The chain runs to 310 residues: Methionyl-tRNA formyltransferase (310 aa).

A (6S)-5,6,7,8-tetrahydrofolate-binding site is contributed by 111–114 (SLLP).

Belongs to the Fmt family.

The catalysed reaction is L-methionyl-tRNA(fMet) + (6R)-10-formyltetrahydrofolate = N-formyl-L-methionyl-tRNA(fMet) + (6S)-5,6,7,8-tetrahydrofolate + H(+). In terms of biological role, attaches a formyl group to the free amino group of methionyl-tRNA(fMet). The formyl group appears to play a dual role in the initiator identity of N-formylmethionyl-tRNA by promoting its recognition by IF2 and preventing the misappropriation of this tRNA by the elongation apparatus. This chain is Methionyl-tRNA formyltransferase, found in Nitrobacter hamburgensis (strain DSM 10229 / NCIMB 13809 / X14).